The following is a 440-amino-acid chain: Ribulose bisphosphate carboxylase large chain (440 aa).

N6,N6,N6-trimethyllysine is present on Lys4. Residues Asn113 and Thr163 each coordinate substrate. Catalysis depends on Lys165, which acts as the Proton acceptor. Residue Lys167 coordinates substrate. Mg(2+) contacts are provided by Lys191, Asp193, and Glu194. Lys191 is modified (N6-carboxylysine). His284 (proton acceptor) is an active-site residue. Substrate-binding residues include Arg285, His317, and Ser369.

Belongs to the RuBisCO large chain family. Type I subfamily. In terms of assembly, heterohexadecamer of 8 large chains and 8 small chains; disulfide-linked. The disulfide link is formed within the large subunit homodimers. The cofactor is Mg(2+). In terms of processing, the disulfide bond which can form in the large chain dimeric partners within the hexadecamer appears to be associated with oxidative stress and protein turnover.

The protein resides in the plastid. It is found in the chloroplast. The catalysed reaction is 2 (2R)-3-phosphoglycerate + 2 H(+) = D-ribulose 1,5-bisphosphate + CO2 + H2O. It catalyses the reaction D-ribulose 1,5-bisphosphate + O2 = 2-phosphoglycolate + (2R)-3-phosphoglycerate + 2 H(+). In terms of biological role, ruBisCO catalyzes two reactions: the carboxylation of D-ribulose 1,5-bisphosphate, the primary event in carbon dioxide fixation, as well as the oxidative fragmentation of the pentose substrate in the photorespiration process. Both reactions occur simultaneously and in competition at the same active site. In Matteuccia struthiopteris (European ostrich fern), this protein is Ribulose bisphosphate carboxylase large chain.